We begin with the raw amino-acid sequence, 225 residues long: Uracil-DNA glycosylase (225 aa).

Catalysis depends on aspartate 65, which acts as the Proton acceptor.

It belongs to the uracil-DNA glycosylase (UDG) superfamily. UNG family.

The protein localises to the cytoplasm. The enzyme catalyses Hydrolyzes single-stranded DNA or mismatched double-stranded DNA and polynucleotides, releasing free uracil.. Functionally, excises uracil residues from the DNA which can arise as a result of misincorporation of dUMP residues by DNA polymerase or due to deamination of cytosine. This chain is Uracil-DNA glycosylase, found in Bacillus thuringiensis subsp. konkukian (strain 97-27).